A 971-amino-acid chain; its full sequence is Nitrogen regulatory protein areA (971 aa).

Disordered stretches follow at residues 39–61 (IHNA…DASA), 146–169 (HKEE…DAGS), 262–307 (QPAH…VNST), 390–416 (SASM…NVST), and 587–691 (DNNG…GNAP). Residues 42–59 (APTQRTXNSNRIPNSRDA) are compositionally biased toward polar residues. Basic and acidic residues predominate over residues 146–159 (HKEEQQQRQDEADA). 2 stretches are compositionally biased toward polar residues: residues 262–274 (QPAH…SEFN) and 297–307 (FSPQVPAVNST). Residues 390 to 400 (SASMSNNNNNS) show a composition bias toward low complexity. Composition is skewed to polar residues over residues 597–606 (LERSQSQSFR) and 632–645 (NGFE…QSSP). Low complexity-rich tracts occupy residues 654–663 (SGFSSVAPSR) and 680–691 (AAAGNGNDGNAP). A GATA-type zinc finger spans residues 694–718 (CTNCFTQTTPLWRRNPEGQPLCNAC). Residues 742 to 918 (NRGSGTNVPV…PFGSSAGLSS (177 aa)) are disordered. Residues 744–794 (GSGTNVPVGGSSTRSKKTASTLNSRKNSTLSMSTATANSTKPNSSNPTPRV) show a composition bias toward polar residues. Positions 796 to 826 (TPPATSQPPSSKDVDSPVSGTTSGANTAGST) are enriched in low complexity. Gly residues predominate over residues 832–845 (GGPGPSSGAVGGKG). The span at 863 to 875 (SSMSMQRPATASS) shows a compositional bias: polar residues. Over residues 892–918 (SMDIDSPDSTSSIDGPRPFGSSAGLSS) the composition is skewed to low complexity.

It localises to the nucleus. In terms of biological role, major nitrogen regulatory protein. Positively acting regulatory gene of nitrogen metabolite repression. The sequence is that of Nitrogen regulatory protein areA (AREA) from Fusarium fujikuroi (Bakanae and foot rot disease fungus).